A 465-amino-acid chain; its full sequence is BTB/POZ and MATH domain-containing protein 4 (465 aa).

The tract at residues 12–40 is disordered; that stretch reads LQRQNPLQKSEQQRRNFEMPSPPTTTSLS. Residues 46 to 180 enclose the MATH domain; that stretch reads NGSHSFTIKG…DDCLKINCTV (135 aa). The BTB domain maps to 216–282; that stretch reads SDITFNVSGE…IYKDALIEDA (67 aa). 2 disordered regions span residues 395–429 and 441–465; these read SGGGGKTRSVWGQFSDGGAETNGRQAQTWGDINGG and VNANGSGRNNNDNNNSDDPMAELED. Low complexity predominate over residues 442–458; that stretch reads NANGSGRNNNDNNNSDD.

Belongs to the Tdpoz family. In terms of assembly, interacts with RAP2-4. Binds to MYB56 at the promoter of FLOWERING LOCUS T (FT). As to expression, ubiquitous.

It is found in the cytoplasm. It functions in the pathway protein modification; protein ubiquitination. Functionally, may act as a substrate-specific adapter of an E3 ubiquitin-protein ligase complex (CUL3-RBX1-BTB) which mediates the ubiquitination and subsequent proteasomal degradation of target proteins. This is BTB/POZ and MATH domain-containing protein 4 (BPM4) from Arabidopsis thaliana (Mouse-ear cress).